We begin with the raw amino-acid sequence, 123 residues long: Large ribosomal subunit protein uL22c (123 aa).

This sequence belongs to the universal ribosomal protein uL22 family. As to quaternary structure, part of the 50S ribosomal subunit.

The protein localises to the plastid. It localises to the chloroplast. Its function is as follows. This protein binds specifically to 23S rRNA. Functionally, the globular domain of the protein is located near the polypeptide exit tunnel on the outside of the subunit, while an extended beta-hairpin is found that lines the wall of the exit tunnel in the center of the 70S ribosome. The polypeptide is Large ribosomal subunit protein uL22c (rpl22) (Illicium oligandrum (Star anise)).